A 528-amino-acid chain; its full sequence is Probable rhamnogalacturonate lyase A (528 aa).

A signal peptide spans 1 to 20; that stretch reads MLSRTILFSTSFLWVRVANA. Disulfide bonds link C50/C93 and C184/C193.

The protein belongs to the polysaccharide lyase 4 family.

It is found in the secreted. It catalyses the reaction Endotype eliminative cleavage of L-alpha-rhamnopyranosyl-(1-&gt;4)-alpha-D-galactopyranosyluronic acid bonds of rhamnogalacturonan I domains in ramified hairy regions of pectin leaving L-rhamnopyranose at the reducing end and 4-deoxy-4,5-unsaturated D-galactopyranosyluronic acid at the non-reducing end.. Functionally, pectinolytic enzymes consist of four classes of enzymes: pectin lyase, polygalacturonase, pectin methylesterase and rhamnogalacturonase. Degrades the rhamnogalacturonan I (RG-I) backbone of pectin. The sequence is that of Probable rhamnogalacturonate lyase A (rglA) from Aspergillus flavus (strain ATCC 200026 / FGSC A1120 / IAM 13836 / NRRL 3357 / JCM 12722 / SRRC 167).